The sequence spans 132 residues: Ribonuclease P protein component (132 aa).

Belongs to the RnpA family. In terms of assembly, consists of a catalytic RNA component (M1 or rnpB) and a protein subunit.

It catalyses the reaction Endonucleolytic cleavage of RNA, removing 5'-extranucleotides from tRNA precursor.. Functionally, RNaseP catalyzes the removal of the 5'-leader sequence from pre-tRNA to produce the mature 5'-terminus. It can also cleave other RNA substrates such as 4.5S RNA. The protein component plays an auxiliary but essential role in vivo by binding to the 5'-leader sequence and broadening the substrate specificity of the ribozyme. This chain is Ribonuclease P protein component, found in Marinomonas sp. (strain MWYL1).